A 484-amino-acid polypeptide reads, in one-letter code: 3-isopropylmalate dehydratase large subunit (484 aa).

3 residues coordinate [4Fe-4S] cluster: Cys352, Cys412, and Cys415. Positions 462–484 are disordered; the sequence is GTLSSPSDLDPAPESAAVSSSAA.

It belongs to the aconitase/IPM isomerase family. LeuC type 1 subfamily. Heterodimer of LeuC and LeuD. It depends on [4Fe-4S] cluster as a cofactor.

The enzyme catalyses (2R,3S)-3-isopropylmalate = (2S)-2-isopropylmalate. It participates in amino-acid biosynthesis; L-leucine biosynthesis; L-leucine from 3-methyl-2-oxobutanoate: step 2/4. Functionally, catalyzes the isomerization between 2-isopropylmalate and 3-isopropylmalate, via the formation of 2-isopropylmaleate. The polypeptide is 3-isopropylmalate dehydratase large subunit (Arthrobacter sp. (strain FB24)).